A 353-amino-acid polypeptide reads, in one-letter code: UDP-N-acetylglucosamine--N-acetylmuramyl-(pentapeptide) pyrophosphoryl-undecaprenol N-acetylglucosamine transferase (353 aa).

UDP-N-acetyl-alpha-D-glucosamine is bound by residues N123, R161, S189, I243, 262-267 (ALTVSE), and Q287.

The protein belongs to the glycosyltransferase 28 family. MurG subfamily.

It localises to the cell membrane. It carries out the reaction di-trans,octa-cis-undecaprenyl diphospho-N-acetyl-alpha-D-muramoyl-L-alanyl-D-glutamyl-meso-2,6-diaminopimeloyl-D-alanyl-D-alanine + UDP-N-acetyl-alpha-D-glucosamine = di-trans,octa-cis-undecaprenyl diphospho-[N-acetyl-alpha-D-glucosaminyl-(1-&gt;4)]-N-acetyl-alpha-D-muramoyl-L-alanyl-D-glutamyl-meso-2,6-diaminopimeloyl-D-alanyl-D-alanine + UDP + H(+). The protein operates within cell wall biogenesis; peptidoglycan biosynthesis. Cell wall formation. Catalyzes the transfer of a GlcNAc subunit on undecaprenyl-pyrophosphoryl-MurNAc-pentapeptide (lipid intermediate I) to form undecaprenyl-pyrophosphoryl-MurNAc-(pentapeptide)GlcNAc (lipid intermediate II). This Buchnera aphidicola subsp. Baizongia pistaciae (strain Bp) protein is UDP-N-acetylglucosamine--N-acetylmuramyl-(pentapeptide) pyrophosphoryl-undecaprenol N-acetylglucosamine transferase.